The following is a 126-amino-acid chain: Ribonuclease P protein component (126 aa).

The protein belongs to the RnpA family. Consists of a catalytic RNA component (M1 or rnpB) and a protein subunit.

It carries out the reaction Endonucleolytic cleavage of RNA, removing 5'-extranucleotides from tRNA precursor.. RNaseP catalyzes the removal of the 5'-leader sequence from pre-tRNA to produce the mature 5'-terminus. It can also cleave other RNA substrates such as 4.5S RNA. The protein component plays an auxiliary but essential role in vivo by binding to the 5'-leader sequence and broadening the substrate specificity of the ribozyme. In Synechococcus sp. (strain JA-3-3Ab) (Cyanobacteria bacterium Yellowstone A-Prime), this protein is Ribonuclease P protein component.